The primary structure comprises 139 residues: MAMSSLWWTAILLLALTVSMCYGVPTYQDFLRTHVDFPKTSFPNIAAYCNVMMVRRGINVHGRCKSLNTFVHTDPRNLNTLCINQPNRALRTTQQQLPVTDCKLIRSHPTCSYTGNQFNHRVRVGCWGGLPVHLDGTFP.

The N-terminal stretch at 1–21 (MAMSSLWWTAILLLALTVSMC) is a signal peptide. Histidine 34 (proton acceptor) is an active-site residue. 3 disulfides stabilise this stretch: cysteine 49–cysteine 102, cysteine 64–cysteine 111, and cysteine 82–cysteine 126. Residues cysteine 102 and valine 122 each contribute to the tRNA site. Histidine 133 serves as the catalytic Proton donor.

The protein belongs to the pancreatic ribonuclease family. In terms of assembly, homodimer. Interacts with RNH1; inhibiting ANG ribonuclease activity.

Its subcellular location is the secreted. The protein localises to the nucleus. It localises to the nucleolus. The protein resides in the cytoplasm. It is found in the stress granule. Secreted ribonuclease that can either promote or restrict cell proliferation of target cells, depending on the context. Endocytosed in target cells via its receptor PLXNB2 and translocates to the cytoplasm or nucleus. Under stress conditions, localizes to the cytoplasm and promotes the assembly of stress granules (SGs): specifically cleaves a subset of tRNAs within anticodon loops to produce tRNA-derived stress-induced fragments (tiRNAs), resulting in translation repression and inhibition of cell proliferation. tiRNas also prevent formation of apoptosome, thereby promoting cell survival. Preferentially cleaves RNAs between a pyrimidine and an adenosine residue, suggesting that it cleaves the anticodon loop of tRNA(Ala) (32-UUAGCAU-38) after positions 33 and 36. Cleaves a subset of tRNAs, including tRNA(Ala), tRNA(Glu), tRNA(Gly), tRNA(Lys), tRNA(Val), tRNA(His), tRNA(Asp) and tRNA(Sec). Under growth conditions and in differentiated cells, translocates to the nucleus and stimulates ribosomal RNA (rRNA) transcription, including that containing the initiation site sequences of 45S rRNA, thereby promoting cell growth and proliferation. Angiogenin induces vascularization of normal and malignant tissues via its ability to promote rRNA transcription. This is Angiogenin (ANG) from Gallus gallus (Chicken).